Here is a 110-residue protein sequence, read N- to C-terminus: U1-lycotoxin-Ls1mm (110 aa).

The signal sequence occupies residues 1–20 (MKFVLLFGVLLVTLFSYSSA). The propeptide occupies 21–44 (EMLDDFDQADEDELLSLIEKEEAR). Intrachain disulfides connect Cys47-Cys62, Cys54-Cys71, Cys61-Cys89, and Cys73-Cys87.

Belongs to the neurotoxin 19 (CSTX) family. 03 subfamily. As to expression, expressed by the venom gland.

Its subcellular location is the secreted. This chain is U1-lycotoxin-Ls1mm, found in Lycosa singoriensis (Wolf spider).